A 1641-amino-acid polypeptide reads, in one-letter code: Maestro heat-like repeat-containing protein family member 1 (1641 aa).

HEAT repeat units follow at residues Glu3 to Val41, Val159 to Glu198, Cys344 to Ala382, Glu385 to Leu423, Pro1048 to Gly1086, Leu1358 to Asp1396, and Gln1605 to Ala1641.

It belongs to the MROH1 family. As to quaternary structure, homooligomer; homooligomerizes at lysosome scission sites.

It is found in the lysosome membrane. Functionally, lysosome fission factor. Recruited to lysosomes by RAB7 (RAB7A or RAB7B) at scission sites and homooligomerizes to mediate the constriction and scission of lysosomal tubules. May sever membranes by inserting amphipathic helices into one bilayer leaflet. Lysosome fission is required to maintain their steady-state number, shape, size, composition and function, and to accomplish regeneration. This Homo sapiens (Human) protein is Maestro heat-like repeat-containing protein family member 1.